The sequence spans 99 residues: RNA-binding protein HI_1333 (99 aa).

In terms of domain architecture, CRM spans threonine 2–arginine 98.

The sequence is that of RNA-binding protein HI_1333 from Haemophilus influenzae (strain ATCC 51907 / DSM 11121 / KW20 / Rd).